The following is a 184-amino-acid chain: NADH-quinone oxidoreductase subunit B (184 aa).

Residues C37, C38, C103, and C132 each contribute to the [4Fe-4S] cluster site.

This sequence belongs to the complex I 20 kDa subunit family. As to quaternary structure, NDH-1 is composed of 14 different subunits. Subunits NuoB, C, D, E, F, and G constitute the peripheral sector of the complex. It depends on [4Fe-4S] cluster as a cofactor.

The protein resides in the cell membrane. It catalyses the reaction a quinone + NADH + 5 H(+)(in) = a quinol + NAD(+) + 4 H(+)(out). NDH-1 shuttles electrons from NADH, via FMN and iron-sulfur (Fe-S) centers, to quinones in the respiratory chain. The immediate electron acceptor for the enzyme in this species is believed to be a menaquinone. Couples the redox reaction to proton translocation (for every two electrons transferred, four hydrogen ions are translocated across the cytoplasmic membrane), and thus conserves the redox energy in a proton gradient. The sequence is that of NADH-quinone oxidoreductase subunit B from Mycobacterium marinum (strain ATCC BAA-535 / M).